We begin with the raw amino-acid sequence, 113 residues long: Probable protein L3 (113 aa).

In Bos taurus (Bovine), this protein is Probable protein L3.